Reading from the N-terminus, the 261-residue chain is Zaragozic acid A biosynthesis cluster protein 8 (261 aa).

Residues 242 to 254 (GTRSHTPAATQRR) are compositionally biased toward polar residues. The disordered stretch occupies residues 242–261 (GTRSHTPAATQRRGQGRGCG).

It participates in secondary metabolite biosynthesis. Part of the gene cluster that mediates the biosynthesis of squalestatin S1 (SQS1, also known as zaragozic acid A), a heavily oxidized fungal polyketide that offers potent cholesterol lowering activity by targeting squalene synthase (SS). SQS1 is composed of a 2,8-dioxobicyclic[3.2.1]octane-3,4,5-tricarboxyclic acid core that is connected to two lipophilic polyketide arms. These initial steps feature the priming of an unusual benzoic acid starter unit onto the highly reducing polyketide synthase clz14, followed by oxaloacetate extension and product release to generate a tricarboxylic acid containing product. The phenylalanine ammonia lyase (PAL) clz10 and the acyl-CoA ligase clz12 are involved in transforming phenylalanine into benzoyl-CoA. The citrate synthase-like protein clz17 is involved in connecting the C-alpha-carbons of the hexaketide chain and oxaloacetate to afford the tricarboxylic acid unit. The potential hydrolytic enzymes, clz11 and clz13, are in close proximity to pks2 and may participate in product release. On the other side, the tetraketide arm is synthesized by a the squalestatin tetraketide synthase clz2 and enzymatically esterified to the core in the last biosynthetic step, by the acetyltransferase clz6. The biosynthesis of the tetraketide must involve 3 rounds of chain extension. After the first and second rounds methyl-transfer occurs, and in all rounds of extension the ketoreductase and dehydratase are active. The enoyl reductase and C-MeT of clz2 are not active in the final round of extension. The acetyltransferase clz6 appears to have a broad substrate selectivity for its acyl CoA substrate, allowing the in vitro synthesis of novel squalestatins. The biosynthesis of SQS1 requires several oxidative steps likely performed by oxidoreductases clz3, clz15 and clz16. Finally, in support of the identification of the cluster as being responsible for SQS1 production, the cluster contains a gene encoding a putative squalene synthase (SS) clz20, suggesting a likely mechanism for self-resistance. The chain is Zaragozic acid A biosynthesis cluster protein 8 from Cochliobolus lunatus (Filamentous fungus).